The primary structure comprises 385 residues: MVLLYILIMVALIPMYMTVVQDATFSHPPPGLLIPEAWSGSGSIRLWTDAQEIPVRCFWKLVYDPRIHPETAAIQQGDSIMYMYSGTRFLDYRTVLSALLLTFVFFWRMLSMFDRSRNRFQRACVSIPSALLEVCRQKAIKKTATLPFYGQALYFGIMCLYTAHIVLWDFLNSFAGTLWLITLNLANGTAQIINLRKERHRNRHDEESSWTFGQIVPIVLLVSPLVAAFEDLLSKRSRRALREGSVGNTSLNEVDLTPEPSLTEATTLSLHTRPLIYSVPTSITQSSIASQKSSGTPAQDLIRSSWPYAILFWELHVLLAFMVIWLPLAQSQLFIFRYAYWEAYYAFPAAVGTFWLTVVIAVPFSSIGRSSYPCPKPRRSGLNVA.

The signal sequence occupies residues 1 to 22 (MVLLYILIMVALIPMYMTVVQD). 2 consecutive transmembrane segments (helical) span residues 94-114 (TVLS…SMFD) and 148-168 (FYGQ…IVLW). The N-linked (GlcNAc...) asparagine glycan is linked to N187. Residues 209–229 (SWTFGQIVPIVLLVSPLVAAF) form a helical membrane-spanning segment. The N-linked (GlcNAc...) asparagine glycan is linked to N248. The next 2 membrane-spanning stretches (helical) occupy residues 309–329 (AILF…LPLA) and 344–364 (YYAF…AVPF).

The protein localises to the membrane. In terms of biological role, part of the gene cluster that mediates the biosynthesis of elsinochromes, pigments consisting of at least four interconvertible tautomers (A, B, C and D) that have a core phenolic quinone to which various side chains are attached and which play an important role in fungal pathogenesis. The non-reducing polyketide synthase PKS1 was proposed to iteratively catalyze decarboxylation between acetyl-CoA and malonyl-CoA subunits for polyketide chain elongation. The released polyketide undergoes cyclization to form an aromatic ring, and proceeds via serial modification steps to produce the heptaketide back- bone of elsinochrome. As elsinochrome has a symmetrical structure, two identical heptaketides are fused to form a core 1,2-dihydrobenzo-perylene ring structure, which can then be successively modified to produce the various derivatives of elsinochrome. Some of these reactions may be cooperatively carried out, at least in part, by the products of RDT1, OXR1 and PKS1. PRF1, embedded within the elsinochrome cluster possibly functions to stabilize some of the biosynthetic enzymes required for elsinochrome production. As prefoldin is a hexamer containing 2 a and 4 b subunits, additional prefoldin subunits, whose coding genes may not immediately link to the elsinochrome biosynthetic gene cluster, are required to fulfill the chaperone function. In addition, no methyltransferase-coding gene exists within the biosynthetic gene cluster, even though elsinochrome has four methyl groups at positions C3, C7, C8 and C12. Apparently, the identified gene cluster does not contain the entire entourage of genes responsible for elsinochrome biosynthesis. Once elsinochrome is synthesized, it must be exported outside the fungal cells, which is probably accomplished by the ECT1 transporter, to avoid toxicity. This Elsinoe fawcettii (Citrus scab fungus) protein is Elsinochromes biosynthesis cluster protein HP2.